We begin with the raw amino-acid sequence, 637 residues long: MLNITLPDGSVRQYESPVTVAQIAASIGAGLAKAAVAGKVNGKLVDACDPITEDSSVQIITPKDQEGIEIIRHSCAHLVGHAVKQLYPNAKMVIGPVIEEGFYYDIATEKPFTPEDVAAIEARMKELIAQDYDVVKIMTPRAEAIKIFQERGEEYKLRLIDDMPEVEAMGMYHHQEYVDMCRGPHVPNTRFLKNFKLTKLAGAYWRGDSNNEMLQRIYGTAWATKDELKAYIQRIEEAEKRDHRKLGKQLDLFHLQDEAPGMVFWHPKGWALWQVIEQHMRKELNAAGYKEVKTPQIMDKTFWEKSGHWDNYKDNMFVTSSEKREYAVKPMNCPGHVQIFNNGLRSYRDLPMRLAEFGSCHRNEPSGALHGLMRVRGFVQDDAHIFCTEDQIVSEARAFNELLVRIYKQFGFHDVSVKLSLRPEKRAGSDDVWDKAEQGLREALTACGVEWGELPGEGAFYGPKIEYHVRDALGRSWQCGTLQLDFVLPERLGAEYVTENNDRARPVMLHRAILGSLERFIGILIENHAGSFPLWLAPVQLVIMNITENQADYCREVAAKLQAAGFRAELDLRNEKIGYKIRDNSQYRFPYQIVVGDKEKQENKVAVRRKAEDLGSLDLDDFIAQLQQEITDALVNH.

The TGS domain maps to 1 to 61 (MLNITLPDGS…TEDSSVQIIT (61 aa)). Residues 242–533 (DHRKLGKQLD…LIENHAGSFP (292 aa)) form a catalytic region. Zn(2+) contacts are provided by C333, H384, and H510.

It belongs to the class-II aminoacyl-tRNA synthetase family. In terms of assembly, homodimer. Zn(2+) is required as a cofactor.

The protein localises to the cytoplasm. It carries out the reaction tRNA(Thr) + L-threonine + ATP = L-threonyl-tRNA(Thr) + AMP + diphosphate + H(+). Its function is as follows. Catalyzes the attachment of threonine to tRNA(Thr) in a two-step reaction: L-threonine is first activated by ATP to form Thr-AMP and then transferred to the acceptor end of tRNA(Thr). Also edits incorrectly charged L-seryl-tRNA(Thr). This Neisseria meningitidis serogroup C (strain 053442) protein is Threonine--tRNA ligase.